Consider the following 404-residue polypeptide: Glycerol-1-phosphate dehydrogenase [NAD(P)+] (404 aa).

NAD(+)-binding positions include aspartate 56, 118 to 122 (GTIHD), and 140 to 143 (TAPS). Position 145 (aspartate 145) interacts with substrate. Serine 149 is a binding site for NAD(+). Residue aspartate 192 coordinates substrate. Residues aspartate 192 and histidine 272 each contribute to the Ni(2+) site. Histidine 276 is a substrate binding site. A Ni(2+)-binding site is contributed by histidine 292.

Belongs to the glycerol-1-phosphate dehydrogenase family. As to quaternary structure, homodimer. Ni(2+) is required as a cofactor.

It localises to the cytoplasm. It carries out the reaction sn-glycerol 1-phosphate + NAD(+) = dihydroxyacetone phosphate + NADH + H(+). The catalysed reaction is sn-glycerol 1-phosphate + NADP(+) = dihydroxyacetone phosphate + NADPH + H(+). Catalyzes the NAD(P)H-dependent reduction of dihydroxyacetonephosphate (DHAP or glycerone phosphate) to glycerol 1-phosphate (G1P). The G1P thus generated is probably used for the synthesis of phosphoglycerolipids in Gram-positive bacterial species. The protein is Glycerol-1-phosphate dehydrogenase [NAD(P)+] of Geobacillus stearothermophilus (Bacillus stearothermophilus).